The sequence spans 147 residues: Ribonuclease H (147 aa).

Residues M1–R142 form the RNase H type-1 domain. Mg(2+)-binding residues include D10, E48, D70, and D134.

Belongs to the RNase H family. Monomer. The cofactor is Mg(2+).

The protein resides in the cytoplasm. It catalyses the reaction Endonucleolytic cleavage to 5'-phosphomonoester.. Functionally, endonuclease that specifically degrades the RNA of RNA-DNA hybrids. The sequence is that of Ribonuclease H from Marinobacter nauticus (strain ATCC 700491 / DSM 11845 / VT8) (Marinobacter aquaeolei).